Consider the following 530-residue polypeptide: Apolipoprotein N-acyltransferase (530 aa).

A run of 6 helical transmembrane segments spans residues 19–39 (LIAGLAAALAHPPFGVLPGLL), 65–85 (WLAGVGYFGLGTWWVGEAFLV), 96–116 (FAVTGMAAGLALFWGLAALLY), 128–148 (LTFAGAFAALEWMRGHVLTGF), 169–189 (LVGAYGLTWITLAIAGAPAVW), and 197–217 (AATGLAVASLIGLYGYGAIAL). The region spanning 232 to 485 (VQADIKQDLK…SGVIDAQIPG (254 aa)) is the CN hydrolase domain. E274 (proton acceptor) is an active-site residue. The active site involves K343. C396 serves as the catalytic Nucleophile.

The protein belongs to the CN hydrolase family. Apolipoprotein N-acyltransferase subfamily.

It localises to the cell inner membrane. The catalysed reaction is N-terminal S-1,2-diacyl-sn-glyceryl-L-cysteinyl-[lipoprotein] + a glycerophospholipid = N-acyl-S-1,2-diacyl-sn-glyceryl-L-cysteinyl-[lipoprotein] + a 2-acyl-sn-glycero-3-phospholipid + H(+). Its pathway is protein modification; lipoprotein biosynthesis (N-acyl transfer). Functionally, catalyzes the phospholipid dependent N-acylation of the N-terminal cysteine of apolipoprotein, the last step in lipoprotein maturation. This Caulobacter vibrioides (strain ATCC 19089 / CIP 103742 / CB 15) (Caulobacter crescentus) protein is Apolipoprotein N-acyltransferase.